The primary structure comprises 642 residues: Threonine--tRNA ligase (642 aa).

The TGS domain maps to 1–61 (MPVITLPDGS…ENDAQLSIIT (61 aa)). The segment at 243 to 534 (DHRKIGKQLD…LTEEFAGFFP (292 aa)) is catalytic. Position 286 is an N6-acetyllysine (Lys-286). Cys-334, His-385, and His-511 together coordinate Zn(2+).

Belongs to the class-II aminoacyl-tRNA synthetase family. In terms of assembly, homodimer. It depends on Zn(2+) as a cofactor.

The protein localises to the cytoplasm. The catalysed reaction is tRNA(Thr) + L-threonine + ATP = L-threonyl-tRNA(Thr) + AMP + diphosphate + H(+). Catalyzes the attachment of threonine to tRNA(Thr) in a two-step reaction: L-threonine is first activated by ATP to form Thr-AMP and then transferred to the acceptor end of tRNA(Thr). Also edits incorrectly charged L-seryl-tRNA(Thr). In Escherichia coli O157:H7, this protein is Threonine--tRNA ligase.